The sequence spans 673 residues: Citrate exporter 1 (673 aa).

The interval 1–44 is disordered; it reads MFNLNTKSSKEPEVTEVAVDSTPSSPVTRESSPESSPDNSAVDL. The segment covering 21 to 39 has biased composition (polar residues); it reads STPSSPVTRESSPESSPDN. A helical membrane pass occupies residues 67-87; that stretch reads FLVFGAMAFCMLVSFMDQNGI. N-linked (GlcNAc...) asparagine glycosylation is present at asparagine 99. 4 consecutive transmembrane segments (helical) span residues 103–123, 133–153, 164–184, and 194–214; these read TISW…VLYG, LVFM…ACAQ, FSGI…SDIV, and GILG…GAAF. N-linked (GlcNAc...) asparagine glycosylation occurs at asparagine 217. 8 consecutive transmembrane segments (helical) span residues 222-242, 261-281, 292-312, 322-342, 364-384, 393-413, 419-439, and 465-485; these read AIFY…FFIL, PGLF…AGGG, ISML…EGFF, IFGT…GIAY, AAGM…ISGQ, LEVI…KCFW, MALL…CFQP, and SFGG…SLKA. Residue asparagine 526 is glycosylated (N-linked (GlcNAc...) asparagine). Residues 529-549 form a helical membrane-spanning segment; the sequence is HTVFVFLCPIVGACLLVTVFV. Residues 564–596 show a composition bias toward basic and acidic residues; that stretch reads AKTVEDKDKDESGTDCEDMTKGEVLVSEKEGKL. 2 disordered regions span residues 564 to 608 and 636 to 673; these read AKTV…MHFG and FPPM…IQEE. N-linked (GlcNAc...) asparagine glycosylation is found at asparagine 599 and asparagine 662.

Belongs to the major facilitator superfamily.

It is found in the cell membrane. The catalysed reaction is citrate(in) = citrate(out). Its function is as follows. Transmembrane transporter that exports citrate across the cell membrane. In Yarrowia lipolytica (strain CLIB 122 / E 150) (Yeast), this protein is Citrate exporter 1.